The sequence spans 526 residues: Glucose-6-phosphate isomerase (526 aa).

Residue Glu-323 is the Proton donor of the active site. Catalysis depends on residues His-352 and Lys-454.

The protein belongs to the GPI family.

Its subcellular location is the cytoplasm. The enzyme catalyses alpha-D-glucose 6-phosphate = beta-D-fructose 6-phosphate. It functions in the pathway carbohydrate biosynthesis; gluconeogenesis. The protein operates within carbohydrate degradation; glycolysis; D-glyceraldehyde 3-phosphate and glycerone phosphate from D-glucose: step 2/4. Functionally, catalyzes the reversible isomerization of glucose-6-phosphate to fructose-6-phosphate. This Prochlorococcus marinus subsp. pastoris (strain CCMP1986 / NIES-2087 / MED4) protein is Glucose-6-phosphate isomerase.